Consider the following 251-residue polypeptide: Cell division protein ZapD (251 aa).

The protein belongs to the ZapD family. Interacts with FtsZ.

It localises to the cytoplasm. Functionally, cell division factor that enhances FtsZ-ring assembly. Directly interacts with FtsZ and promotes bundling of FtsZ protofilaments, with a reduction in FtsZ GTPase activity. The sequence is that of Cell division protein ZapD from Burkholderia cenocepacia (strain ATCC BAA-245 / DSM 16553 / LMG 16656 / NCTC 13227 / J2315 / CF5610) (Burkholderia cepacia (strain J2315)).